Consider the following 385-residue polypeptide: Probable thioesterase PNKD (385 aa).

Positions 31–42 are enriched in polar residues; that stretch reads NKASQNRSRALQ. Residues 31–57 form a disordered region; the sequence is NKASQNRSRALQSHSSPECKEEPEPLS. Zn(2+)-binding residues include His-172, His-174, Asp-176, His-177, His-229, Asp-253, and His-291.

The protein belongs to the metallo-beta-lactamase superfamily. Glyoxalase II family. It depends on Zn(2+) as a cofactor. Undergoes cleavage at the N-terminus.

Its subcellular location is the cell membrane. The protein localises to the mitochondrion. It carries out the reaction a thioester + H2O = a thiol + a carboxylate + H(+). Its function is as follows. Probable thioesterase that may play a role in cellular detoxification processes; it likely acts on a yet-unknown alpha-hydroxythioester substrate. In vitro, it is able to catalyze the hydrolysis of S-D-lactoyl-glutathione to form glutathione and D-lactic acid at very low rate, though this reaction is not physiologically relevant in vivo. In Bos taurus (Bovine), this protein is Probable thioesterase PNKD (PNKD).